A 145-amino-acid polypeptide reads, in one-letter code: UI (145 aa).

Residues 1–22 (MKPVPLVLLITSVLLTTHIPLS) form the signal peptide. The residue at position 143 (Val143) is a Valine amide.

Belongs to the sauvagine/corticotropin-releasing factor/urotensin I family.

The protein localises to the secreted. Its function is as follows. Urotensin is found in the teleost caudal neurosecretory system. It has a suggested role in osmoregulation and as a corticotropin-releasing factor. The non-hormonal portion of this precursor may be a urotensin binding protein, urophysin. This Carassius auratus (Goldfish) protein is UI.